Reading from the N-terminus, the 129-residue chain is uncharacterized protein (129 aa).

2 helical membrane-spanning segments follow: residues 35-55 (IVDG…WKIP) and 98-118 (ILLL…IILL).

It is found in the membrane. This is an uncharacterized protein from Saccharomyces cerevisiae (strain ATCC 204508 / S288c) (Baker's yeast).